A 381-amino-acid chain; its full sequence is Sulfofructose kinase (381 aa).

ATP contacts are provided by residues G10, 72–73 (RY), and 100–103 (GNGT). N101 is a binding site for Mg(2+). D131 (proton acceptor) is an active-site residue.

This sequence belongs to the phosphofructokinase type A (PFKA) family. It depends on Mg(2+) as a cofactor.

The enzyme catalyses 6-deoxy-6-sulfo-D-fructose + ATP = 6-deoxy-6-sulfo-D-fructose 1-phosphate + ADP + H(+). In terms of biological role, part of the sulfo-EMP2 pathway, a D-sulfoquinovose degradation pathway that produces sulfolactate (SL). Phosphorylates 6-deoxy-6-sulfo-D-fructose (SF) to 6-deoxy-6-sulfo-D-fructose 1-phosphate (SFP). This chain is Sulfofructose kinase, found in Alkalicoccus urumqiensis (Bacillus urumqiensis).